The primary structure comprises 124 residues: Putative iron-sulfur cluster insertion protein ErpA (124 aa).

The iron-sulfur cluster site is built by Cys52, Cys116, and Cys118.

It belongs to the HesB/IscA family. Homodimer. Iron-sulfur cluster serves as cofactor.

Its function is as follows. Required for insertion of 4Fe-4S clusters. The polypeptide is Putative iron-sulfur cluster insertion protein ErpA (Ralstonia pickettii (strain 12J)).